A 774-amino-acid polypeptide reads, in one-letter code: Pentatricopeptide repeat-containing protein At4g20770 (774 aa).

20 PPR repeats span residues 5–39 (GNKYLASLLRCYRDERCKLSGKVIHGFIVRMGMKS), 40–70 (DTYLCNRLLDLYIECGDGDYARKVFDEMSVR), 71–101 (DVYSWNAFLTFRCKVGDLGEACEVFDGMPER), 102–136 (DVVSWNNMISVLVRKGFEEKALVVYKRMVCDGFLP), 137–171 (SRFTLASVLSACSKVLDGVFGMRCHGVAVKTGLDK), 172–203 (NIFVGNALLSMYAKCGFIVDYGVRVFESLSQP), 204–238 (NEVSYTAVIGGLARENKVLEAVQMFRLMCEKGVQV), 239–270 (DSVCLSNILSISAPREGCDSLSEIYGNELGKQ), 283–313 (DLHLNNSLLEIYAKNKDMNGAELIFAEMPEV), 314–348 (NVVSWNIMIVGFGQEYRSDKSVEFLTRMRDSGFQP), 349–379 (NEVTCISVLGACFRSGDVETGRRIFSSIPQP), 380–414 (SVSAWNAMLSGYSNYEHYEEAISNFRQMQFQNLKP), 415–449 (DKTTLSVILSSCARLRFLEGGKQIHGVVIRTEISK), 450–480 (NSHIVSGLIAVYSECEKMEISECIFDDCINE), 482–516 (DIACWNSMISGFRHNMLDTKALILFRRMHQTAVLC), 518–552 (NETSFATVLSSCSRLCSLLHGRQFHGLVVKSGYVS), 553–583 (DSFVETALTDMYCKCGEIDSARQFFDAVLRK), 584–618 (NTVIWNEMIHGYGHNGRGDEAVGLYRKMISSGEKP), 619–654 (DGITFVSVLTACSHSGLVETGLEILSSMQRIHGIEP), and 655–685 (ELDHYICIVDCLGRAGRLEDAEKLAEATPYK). The segment at 690–765 (LWEILLSSCR…TPGQSWTTYG (76 aa)) is type E motif.

Belongs to the PPR family. PCMP-E subfamily.

The protein is Pentatricopeptide repeat-containing protein At4g20770 (PCMP-E35) of Arabidopsis thaliana (Mouse-ear cress).